A 424-amino-acid chain; its full sequence is Tubby protein homolog 1 (424 aa).

Residues 19–47 (MLEDKQKQKRHQSAGSVRTTTTTSSMSMN) form a disordered region. Residues 37-47 (TTTTTSSMSMN) are compositionally biased toward low complexity.

The protein belongs to the TUB family. As to quaternary structure, interacts with rgb-3.

It localises to the cytoplasm. It is found in the cell projection. Its subcellular location is the axon. The protein localises to the dendrite. The protein resides in the cilium. Has a role in fat regulation independent of daf-16. Implicated in ciliar sensory function which is required for normal sensory behavior such as chemotaxis. Functions in life span control via the insulin/IGF-1 pathway. Thought to be involved in neuronal trafficking. The polypeptide is Tubby protein homolog 1 (Caenorhabditis briggsae).